The primary structure comprises 424 residues: UDP-glycosyltransferase 76H1 (424 aa).

Residues Ser-248, 306–307 (WA), 324–332 (HCGWNSTIE), and 346–349 (FADQ) contribute to the UDP-alpha-D-glucose site.

This sequence belongs to the UDP-glycosyltransferase family.

In terms of biological role, may glycosylate diterpenes or flavonols in leaves. This is UDP-glycosyltransferase 76H1 from Stevia rebaudiana (Stevia).